A 145-amino-acid polypeptide reads, in one-letter code: Mitochondrial import receptor subunit TOM20 homolog (145 aa).

The Mitochondrial intermembrane segment spans residues methionine 1–serine 6. The helical transmembrane segment at alanine 7–phenylalanine 24 threads the bilayer. The Cytoplasmic segment spans residues aspartate 25–glutamate 145. Residues lysine 35, lysine 56, lysine 61, and lysine 68 each participate in a glycyl lysine isopeptide (Lys-Gly) (interchain with G-Cter in ubiquitin) cross-link. 2 positions are modified to phosphoserine: serine 135 and serine 138.

It belongs to the Tom20 family. In terms of assembly, forms part of the preprotein translocase complex of the outer mitochondrial membrane (TOM complex) which consists of at least 7 different proteins (TOMM5, TOMM6, TOMM7, TOMM20, TOMM22, TOMM40 and TOMM70). Interacts with TOM22. Interacts with APEX1. Interacts with TBC1D21. Upon mitochondrial depolarization, interacts with PINK1; the interaction is required for PINK1-TOM-TIM23 supercomplex formation which is critical for PINK1 stabilization at the outer mitochondrial membrane, kinase activation and downstream mitophagy. Post-translationally, ubiquitinated by PRKN during mitophagy, leading to its degradation and enhancement of mitophagy. Deubiquitinated by USP30. As to expression, expressed in brain, kidney, stomach, colon, jejunum, ileum, testis, ovary and oviduct (at protein level). In the brain, expressed in neural cells of the cerebrum and cerebellum (at protein level). In the kidney, expressed in the proximal to distal tubule in the cortex and the outer and inner zones of the medulla (at protein level). In the stomach, expressed in the basal layer of stratified squamous epithelia in the forestomach and in the gastric pit and fundic gland of the glandular stomach (at protein level). Expressed in epithelial cells of the jejunum, ileum, and colon (at protein level). In the testis, expressed by spermatocytes and spermatogonia (at protein level). In the ovaries, expressed by follicular epithelial cells and corpus luteum cells (at protein level). In the oviduct, expressed in the epithelia of the isthmus and the ciliated cells of the ampulla (at protein level). Expressed in the sperm midpiece (at protein level).

It is found in the mitochondrion outer membrane. Central component of the receptor complex responsible for the recognition and translocation of cytosolically synthesized mitochondrial preproteins. Together with TOM22 functions as the transit peptide receptor at the surface of the mitochondrion outer membrane and facilitates the movement of preproteins into the TOM40 translocation pore. Required for the translocation across the mitochondrial outer membrane of cytochrome P450 monooxygenases. This chain is Mitochondrial import receptor subunit TOM20 homolog (Tomm20), found in Mus musculus (Mouse).